The sequence spans 572 residues: Arginine--tRNA ligase (572 aa).

The 'HIGH' region signature appears at 121–131 (PNLAKEMHVGH).

This sequence belongs to the class-I aminoacyl-tRNA synthetase family. In terms of assembly, monomer.

It localises to the cytoplasm. It carries out the reaction tRNA(Arg) + L-arginine + ATP = L-arginyl-tRNA(Arg) + AMP + diphosphate. The protein is Arginine--tRNA ligase of Chromobacterium violaceum (strain ATCC 12472 / DSM 30191 / JCM 1249 / CCUG 213 / NBRC 12614 / NCIMB 9131 / NCTC 9757 / MK).